The chain runs to 227 residues: Cytochrome c oxidase subunit 2 (227 aa).

The Mitochondrial intermembrane portion of the chain corresponds to 1-14; sequence MAYPMQLGFQDATS. Residues 15–45 traverse the membrane as a helical segment; that stretch reads PIMEELLHFHDHTLMIVFLISSLVLYIISLM. The Mitochondrial matrix portion of the chain corresponds to 46–59; it reads LTTKLTHTSTMDAQ. Residues 60–87 traverse the membrane as a helical segment; that stretch reads EVETIWTILPAIILIMIALPSLRILYMM. At 88–227 the chain is on the mitochondrial intermembrane side; the sequence is DEINNPSLTV…YFEKWSASML (140 aa). Cu cation is bound by residues cysteine 196, glutamate 198, cysteine 200, histidine 204, and methionine 207. Residue glutamate 198 participates in Mg(2+) binding. Phosphotyrosine is present on tyrosine 218.

Belongs to the cytochrome c oxidase subunit 2 family. In terms of assembly, component of the cytochrome c oxidase (complex IV, CIV), a multisubunit enzyme composed of 14 subunits. The complex is composed of a catalytic core of 3 subunits MT-CO1, MT-CO2 and MT-CO3, encoded in the mitochondrial DNA, and 11 supernumerary subunits COX4I, COX5A, COX5B, COX6A, COX6B, COX6C, COX7A, COX7B, COX7C, COX8 and NDUFA4, which are encoded in the nuclear genome. The complex exists as a monomer or a dimer and forms supercomplexes (SCs) in the inner mitochondrial membrane with NADH-ubiquinone oxidoreductase (complex I, CI) and ubiquinol-cytochrome c oxidoreductase (cytochrome b-c1 complex, complex III, CIII), resulting in different assemblies (supercomplex SCI(1)III(2)IV(1) and megacomplex MCI(2)III(2)IV(2)). Found in a complex with TMEM177, COA6, COX18, COX20, SCO1 and SCO2. Interacts with TMEM177 in a COX20-dependent manner. Interacts with COX20. Interacts with COX16. The cofactor is Cu cation.

Its subcellular location is the mitochondrion inner membrane. It carries out the reaction 4 Fe(II)-[cytochrome c] + O2 + 8 H(+)(in) = 4 Fe(III)-[cytochrome c] + 2 H2O + 4 H(+)(out). Component of the cytochrome c oxidase, the last enzyme in the mitochondrial electron transport chain which drives oxidative phosphorylation. The respiratory chain contains 3 multisubunit complexes succinate dehydrogenase (complex II, CII), ubiquinol-cytochrome c oxidoreductase (cytochrome b-c1 complex, complex III, CIII) and cytochrome c oxidase (complex IV, CIV), that cooperate to transfer electrons derived from NADH and succinate to molecular oxygen, creating an electrochemical gradient over the inner membrane that drives transmembrane transport and the ATP synthase. Cytochrome c oxidase is the component of the respiratory chain that catalyzes the reduction of oxygen to water. Electrons originating from reduced cytochrome c in the intermembrane space (IMS) are transferred via the dinuclear copper A center (CU(A)) of subunit 2 and heme A of subunit 1 to the active site in subunit 1, a binuclear center (BNC) formed by heme A3 and copper B (CU(B)). The BNC reduces molecular oxygen to 2 water molecules using 4 electrons from cytochrome c in the IMS and 4 protons from the mitochondrial matrix. This Ovis aries (Sheep) protein is Cytochrome c oxidase subunit 2 (MT-CO2).